The following is a 248-amino-acid chain: UPF0246 protein RF_0769 (248 aa).

The protein belongs to the UPF0246 family.

The protein is UPF0246 protein RF_0769 of Rickettsia felis (strain ATCC VR-1525 / URRWXCal2) (Rickettsia azadi).